Consider the following 122-residue polypeptide: Large ribosomal subunit protein uL18 (122 aa).

It belongs to the universal ribosomal protein uL18 family. Part of the 50S ribosomal subunit; part of the 5S rRNA/L5/L18/L25 subcomplex. Contacts the 5S and 23S rRNAs.

This is one of the proteins that bind and probably mediate the attachment of the 5S RNA into the large ribosomal subunit, where it forms part of the central protuberance. The protein is Large ribosomal subunit protein uL18 of Mycobacterium tuberculosis (strain ATCC 25177 / H37Ra).